Reading from the N-terminus, the 457-residue chain is Methanethiol oxidase (457 aa).

The protein belongs to the selenium-binding protein family.

It is found in the nucleus. The protein localises to the cytoplasm. It localises to the cytosol. Its subcellular location is the membrane. It catalyses the reaction methanethiol + O2 + H2O = hydrogen sulfide + formaldehyde + H2O2 + H(+). The protein operates within organosulfur degradation. Functionally, catalyzes the oxidation of methanethiol, an organosulfur compound known to be produced in substantial amounts by gut bacteria. Selenium-binding protein which may be involved in the sensing of reactive xenobiotics in the cytoplasm. May be involved in intra-Golgi protein transport. The protein is Methanethiol oxidase (selenbp1) of Danio rerio (Zebrafish).